We begin with the raw amino-acid sequence, 469 residues long: GDP-fucose protein O-fucosyltransferase 2 (469 aa).

A signal peptide spans 1 to 18 (MKFIIVLLLFFFFKVIDR). Residues 56–60 (GEGFN), 277–279 (HLR), and 373–374 (RF) contribute to the GDP-beta-L-fucose site. Glu-57 acts as the Proton acceptor in catalysis.

Belongs to the glycosyltransferase 68 family.

It localises to the endoplasmic reticulum. It catalyses the reaction L-seryl-[protein] + GDP-beta-L-fucose = 3-O-(alpha-L-fucosyl)-L-seryl-[protein] + GDP + H(+). It carries out the reaction L-threonyl-[protein] + GDP-beta-L-fucose = 3-O-(alpha-L-fucosyl)-L-threonyl-[protein] + GDP + H(+). It functions in the pathway protein modification; protein glycosylation. Functionally, catalyzes the reaction that attaches fucose through an O-glycosidic linkage to a conserved serine or threonine residue in the consensus sequence C1-X-X-S/T-C2 of thrombospondin type I repeats (TSRs) where C1 and C2 are the first and second cysteines of the repeat, respectively. O-fucosylates sporozoite proteins CSP and TRAP. O-fucosylation regulates stability and intracellular trafficking of TRAP but not of CSP. Probably by regulating protein O-fucosylation, may play a role in parasite transmission to the mosquito vector and/or infection of the vertebrate host hepatocytes; however, POFUT2 involvement in transmission/infection is controversial. This Plasmodium falciparum (isolate NF54) protein is GDP-fucose protein O-fucosyltransferase 2.